Here is a 294-residue protein sequence, read N- to C-terminus: ATP phosphoribosyltransferase (294 aa).

It belongs to the ATP phosphoribosyltransferase family. Long subfamily. Requires Mg(2+) as cofactor.

It is found in the cytoplasm. The catalysed reaction is 1-(5-phospho-beta-D-ribosyl)-ATP + diphosphate = 5-phospho-alpha-D-ribose 1-diphosphate + ATP. Its pathway is amino-acid biosynthesis; L-histidine biosynthesis; L-histidine from 5-phospho-alpha-D-ribose 1-diphosphate: step 1/9. Its activity is regulated as follows. Feedback inhibited by histidine. Its function is as follows. Catalyzes the condensation of ATP and 5-phosphoribose 1-diphosphate to form N'-(5'-phosphoribosyl)-ATP (PR-ATP). Has a crucial role in the pathway because the rate of histidine biosynthesis seems to be controlled primarily by regulation of HisG enzymatic activity. This Pelodictyon phaeoclathratiforme (strain DSM 5477 / BU-1) protein is ATP phosphoribosyltransferase.